We begin with the raw amino-acid sequence, 346 residues long: Histone H1.8 (346 aa).

2 stretches are compositionally biased toward low complexity: residues 1-23 (MAPG…SSRS) and 38-48 (PGGPSHSSLPV). 2 disordered regions span residues 1 to 50 (MAPG…PVGR) and 121 to 346 (ATGS…RAEA). In terms of domain architecture, H15 spans 51-129 (RHPPVLRMVL…GATGSFKLVP (79 aa)). The span at 128 to 137 (VPKHKKKIQP) shows a compositional bias: basic residues. Basic and acidic residues predominate over residues 148-167 (RAGEAKGKGPKKPSEAKEDP). The short motif at 164-179 (KEDPPNVGKVKKAAKR) is the Nuclear localization signal element. Basic residues predominate over residues 172–182 (KVKKAAKRPAK). Composition is skewed to basic and acidic residues over residues 205–225 (KDTR…DKAM) and 251–262 (EAYRKTKAESKS). Basic residues predominate over residues 278-288 (TKKKVVAKAKA). Positions 298–309 (KAAAPAKGSGSK) are enriched in low complexity. Positions 334 to 346 (ASSSKVSSQRAEA) are enriched in polar residues.

This sequence belongs to the histone H1/H5 family. As to expression, oocyte-specific.

Its subcellular location is the cytoplasm. The protein resides in the nucleus. It is found in the chromosome. May play a key role in the control of gene expression during oogenesis and early embryogenesis, presumably through the perturbation of chromatin structure. Essential for meiotic maturation of germinal vesicle-stage oocytes. The somatic type linker histone H1c is rapidly replaced by H1oo in a donor nucleus transplanted into an oocyte. The greater mobility of H1oo as compared to H1c may contribute to this rapid replacement and increased instability of the embryonic chromatin structure. The rapid replacement of H1c with H1oo may play an important role in nuclear remodeling. The polypeptide is Histone H1.8 (Homo sapiens (Human)).